Consider the following 530-residue polypeptide: Bifunctional purine biosynthesis protein PurH (530 aa).

The MGS-like domain maps to 1–148 (MNNARPIRRA…KNHKDVTIVV (148 aa)).

The protein belongs to the PurH family.

It carries out the reaction (6R)-10-formyltetrahydrofolate + 5-amino-1-(5-phospho-beta-D-ribosyl)imidazole-4-carboxamide = 5-formamido-1-(5-phospho-D-ribosyl)imidazole-4-carboxamide + (6S)-5,6,7,8-tetrahydrofolate. The enzyme catalyses IMP + H2O = 5-formamido-1-(5-phospho-D-ribosyl)imidazole-4-carboxamide. The protein operates within purine metabolism; IMP biosynthesis via de novo pathway; 5-formamido-1-(5-phospho-D-ribosyl)imidazole-4-carboxamide from 5-amino-1-(5-phospho-D-ribosyl)imidazole-4-carboxamide (10-formyl THF route): step 1/1. It participates in purine metabolism; IMP biosynthesis via de novo pathway; IMP from 5-formamido-1-(5-phospho-D-ribosyl)imidazole-4-carboxamide: step 1/1. In Vibrio vulnificus (strain YJ016), this protein is Bifunctional purine biosynthesis protein PurH.